Reading from the N-terminus, the 158-residue chain is Putative cTAGE family member 3 (158 aa).

Positions 26-96 (QLQESQKQLL…AAVLEEDITD (71 aa)) form a coiled coil.

The protein belongs to the cTAGE family. As to expression, expressed in normal tissues including colon, mammary gland, ovary, placenta, stomach and testis, as well as several fetal tissues.

Functionally, tumor-associated antigen. This Homo sapiens (Human) protein is Putative cTAGE family member 3 (CTAGE3P).